We begin with the raw amino-acid sequence, 632 residues long: MSHPSWLPPRSTGEPLGHVPARMETTHSFGTPSISVSTQQPPKKFAPVVAPKPKYNPYKQPGGEGDFLPPPPPPLEDPGTIPSGSGHFPPPPPLDEGAFIVQRGNPGGKTLEERRSSLDAEIDSLTSILADLECSSPYKPRAPPGSSSSIASPPVSTPVTGHKRMVIPQQPPLTATKKSATKPQAIPIPVTPIGTLKPQPQPVPASYSTASTSSRPAFNVQVKSAQPSTHYMTGSSSGQMYGPGSRSYNTQQVPLSAQCPPPTTCAGTDYAYIPPSGQQAESGFGYTSNQGRYFEPFFAACPSYGGRNEADPAYGQQVQPNTWKREPGYAAPGAGNQNQPGMYSVSGPKKTYITDPVSAPCAPPVQPKERLVKNQKVLQNVVDDRVHGLRKSGFPAPMGPPSVPPSFRPEDELEHLTKKMLYDMENPPADDYFGRCARCGENVVGEGTGCTAMDQVFHVDCFTCMVCDIKLRGQPFYAVEKKAYCEPCYINTLEQCSVCSKPIMERILRATGKAYHPHCFTCVMCHRSLDGIPFTVDACGLIHCIEDFHKKFAPRCSVCKEPIMPAPGQEETVRIVALDRDFHVHCYRCEDCGGLLSEGDNQGCYPLDGHILCKSCNSARIRVLTAKASTDL.

2 disordered regions span residues methionine 1–leucine 118 and serine 135–asparagine 249. Over residues threonine 26 to glutamine 40 the composition is skewed to polar residues. Positions proline 41 to proline 53 are enriched in low complexity. Lysine 109 is modified (N6-acetyllysine). A phosphoserine mark is found at serine 117 and serine 152. Residues proline 144–threonine 160 show a composition bias toward low complexity. 2 stretches are compositionally biased toward polar residues: residues proline 172–lysine 182 and serine 206–glutamine 239. The residue at position 241 (tyrosine 241) is a Phosphotyrosine. Residue arginine 246 is modified to Omega-N-methylarginine. Residue lysine 324 forms a Glycyl lysine isopeptide (Lys-Gly) (interchain with G-Cter in SUMO1) linkage. 3 consecutive LIM zinc-binding domains span residues glycine 434 to leucine 493, glutamate 494 to proline 554, and arginine 555 to valine 623.

It belongs to the zyxin/ajuba family. In terms of assembly, interacts with PDZ domains of SCRIB, with VASP and with ACTN1/alpha-actinin.

Its subcellular location is the nucleus. The protein resides in the cytoplasm. It is found in the cell junction. In terms of biological role, may play a structural role at sites of cell adhesion in maintaining cell shape and motility. In addition to these structural functions, it may also be implicated in signaling events and activation of gene transcription. May be involved in signal transduction from cell adhesion sites to the nucleus allowing successful integration of signals arising from soluble factors and cell-cell adhesion. Also suggested to serve as a scaffold protein upon which distinct protein complexes are assembled in the cytoplasm and in the nucleus. The polypeptide is Lipoma-preferred partner homolog (Lpp) (Rattus norvegicus (Rat)).